A 472-amino-acid chain; its full sequence is 3-isopropylmalate dehydratase large subunit (472 aa).

Residues 289-312 (TWGTNPAQGTGVSQVVPSPDDAKD) form a disordered region. Polar residues predominate over residues 290-304 (WGTNPAQGTGVSQVV). Positions 347, 407, and 410 each coordinate [4Fe-4S] cluster.

It belongs to the aconitase/IPM isomerase family. LeuC type 1 subfamily. In terms of assembly, heterodimer of LeuC and LeuD. It depends on [4Fe-4S] cluster as a cofactor.

It catalyses the reaction (2R,3S)-3-isopropylmalate = (2S)-2-isopropylmalate. Its pathway is amino-acid biosynthesis; L-leucine biosynthesis; L-leucine from 3-methyl-2-oxobutanoate: step 2/4. In terms of biological role, catalyzes the isomerization between 2-isopropylmalate and 3-isopropylmalate, via the formation of 2-isopropylmaleate. This is 3-isopropylmalate dehydratase large subunit from Halalkalibacterium halodurans (strain ATCC BAA-125 / DSM 18197 / FERM 7344 / JCM 9153 / C-125) (Bacillus halodurans).